A 184-amino-acid polypeptide reads, in one-letter code: Small ribosomal subunit protein eS8 (184 aa).

The disordered stretch occupies residues 1–23 (MGISRDSRHKRRLTGGRYPVHKK). Over residues 7-23 (SRHKRRLTGGRYPVHKK) the composition is skewed to basic residues.

The protein belongs to the eukaryotic ribosomal protein eS8 family.

The protein is Small ribosomal subunit protein eS8 (RPS8) of Theileria annulata.